The following is a 94-amino-acid chain: Elongation factor 1-beta (94 aa).

Belongs to the EF-1-beta/EF-1-delta family.

Its function is as follows. Promotes the exchange of GDP for GTP in EF-1-alpha/GDP, thus allowing the regeneration of EF-1-alpha/GTP that could then be used to form the ternary complex EF-1-alpha/GTP/AAtRNA. In Ignicoccus hospitalis (strain KIN4/I / DSM 18386 / JCM 14125), this protein is Elongation factor 1-beta.